The chain runs to 88 residues: MAHKKGASSSRNGRDSAAQRLGVKRFGGQIVKAGEIIVRQRGTKFHPGTGVGRGGDDTLFAKQAGAVEFGIKRGRKTVNIVAAGQAAD.

The disordered stretch occupies residues 1–21; the sequence is MAHKKGASSSRNGRDSAAQRL.

The protein belongs to the bacterial ribosomal protein bL27 family.

The protein is Large ribosomal subunit protein bL27 of Mycobacterium avium (strain 104).